A 250-amino-acid polypeptide reads, in one-letter code: 5'-nucleotidase SurE (250 aa).

Residues aspartate 8, aspartate 9, serine 40, and asparagine 95 each coordinate a divalent metal cation.

The protein belongs to the SurE nucleotidase family. A divalent metal cation is required as a cofactor.

It is found in the cytoplasm. It carries out the reaction a ribonucleoside 5'-phosphate + H2O = a ribonucleoside + phosphate. Nucleotidase that shows phosphatase activity on nucleoside 5'-monophosphates. The sequence is that of 5'-nucleotidase SurE from Nitratidesulfovibrio vulgaris (strain ATCC 29579 / DSM 644 / CCUG 34227 / NCIMB 8303 / VKM B-1760 / Hildenborough) (Desulfovibrio vulgaris).